Reading from the N-terminus, the 150-residue chain is UPF0178 protein PputGB1_5282 (150 aa).

Belongs to the UPF0178 family.

The polypeptide is UPF0178 protein PputGB1_5282 (Pseudomonas putida (strain GB-1)).